The following is a 289-amino-acid chain: NAD(P)H-hydrate epimerase (289 aa).

Residues 71–277 (AQTIDNELMS…SIVEKYNLKV (207 aa)) form the YjeF N-terminal domain. 122 to 126 (NNGGD) contacts (6S)-NADPHX. Positions 123 and 185 each coordinate K(+). (6S)-NADPHX contacts are provided by residues 189 to 195 (GFSFTGE) and aspartate 218. Serine 221 lines the K(+) pocket.

Belongs to the NnrE/AIBP family. It depends on K(+) as a cofactor.

It carries out the reaction (6R)-NADHX = (6S)-NADHX. The catalysed reaction is (6R)-NADPHX = (6S)-NADPHX. Catalyzes the epimerization of the S- and R-forms of NAD(P)HX, a damaged form of NAD(P)H that is a result of enzymatic or heat-dependent hydration. This is a prerequisite for the S-specific NAD(P)H-hydrate dehydratase to allow the repair of both epimers of NAD(P)HX. The sequence is that of NAD(P)H-hydrate epimerase from Plasmodium vivax (strain Salvador I).